Reading from the N-terminus, the 476-residue chain is FAD-dependent monooxygenase ausM (476 aa).

Residues Glu41, Gly55, and Arg114 each coordinate FAD. Residue Tyr222 is part of the active site. FAD contacts are provided by Asp314 and Ala327. The chain crosses the membrane as a helical span at residues Leu447–Tyr467.

The protein belongs to the paxM FAD-dependent monooxygenase family. It depends on FAD as a cofactor.

The protein resides in the membrane. It participates in secondary metabolite biosynthesis; terpenoid biosynthesis. Functionally, FAD-dependent monooxygenase; part of the gene cluster A that mediates the biosynthesis of the fungal meroterpenoid acetoxydehydroaustin. The first step of the pathway is the synthesis of 3,5-dimethylorsellinic acid by the polyketide synthase ausA. 3,5-dimethylorsellinic acid is then prenylated by the polyprenyl transferase ausN. Further epoxidation by the FAD-dependent monooxygenase ausM and cyclization by the probable terpene cyclase ausL lead to the formation of protoaustinoid A. Protoaustinoid A is then oxidized to spiro-lactone preaustinoid A3 by the combined action of the FAD-binding monooxygenases ausB and ausC, and the dioxygenase ausE. Acid-catalyzed keto-rearrangement and ring contraction of the tetraketide portion of preaustinoid A3 by ausJ lead to the formation of preaustinoid A4. The aldo-keto reductase ausK, with the help of ausH, is involved in the next step by transforming preaustinoid A4 into isoaustinone which is in turn hydroxylated by the P450 monooxygenase ausI to form austinolide. The cytochrome P450 monooxygenase ausG then modifies austinolide to austinol. Austinol is further acetylated to austin by the O-acetyltransferase ausP, which spontaneously changes to dehydroaustin. The cytochrome P450 monooxygenase then converts dehydroaustin is into 7-dehydrodehydroaustin. The hydroxylation catalyzed by ausR permits the second O-acetyltransferase ausQ to add an additional acetyl group to the molecule, leading to the formation of acetoxydehydroaustin. Due to genetic rearrangements of the clusters and the subsequent loss of some enzymes, the end product of the Penicillium brasilianum austinoid biosynthesis clusters is acetoxydehydroaustin. The protein is FAD-dependent monooxygenase ausM of Penicillium brasilianum.